The chain runs to 334 residues: D-fructose 1,6-bisphosphatase class 2/sedoheptulose 1,7-bisphosphatase (334 aa).

Mn(2+) is bound by residues Asp-33, Glu-57, Asp-85, and Glu-88. Residues 88 to 90 (EGT), Tyr-119, 164 to 166 (RAR), and 186 to 188 (DGD) each bind substrate. Glu-213 is a Mn(2+) binding site.

It belongs to the FBPase class 2 family. As to quaternary structure, homotetramer. Mn(2+) is required as a cofactor.

The catalysed reaction is beta-D-fructose 1,6-bisphosphate + H2O = beta-D-fructose 6-phosphate + phosphate. It carries out the reaction D-sedoheptulose 1,7-bisphosphate + H2O = D-sedoheptulose 7-phosphate + phosphate. The protein operates within carbohydrate biosynthesis; Calvin cycle. Catalyzes the hydrolysis of fructose 1,6-bisphosphate (Fru 1,6-P2) and sedoheptulose 1,7-bisphosphate (Sed 1,7-P2) to fructose 6-phosphate and sedoheptulose 7-phosphate, respectively. The protein is D-fructose 1,6-bisphosphatase class 2/sedoheptulose 1,7-bisphosphatase of Synechococcus sp. (strain RCC307).